The primary structure comprises 328 residues: Cytochrome c biogenesis protein CcsA (328 aa).

8 consecutive transmembrane segments (helical) span residues 13–33, 46–66, 73–93, 101–121, 146–166, 234–254, 263–283, and 295–315; these read ISFS…LVNL, GIVI…IYSG, LYES…VSYF, LNAI…SGLL, MVLG…LLVI, IISL…VWAN, WDPK…YLHI, and AIVA…VNLL.

The protein belongs to the CcmF/CycK/Ccl1/NrfE/CcsA family. In terms of assembly, may interact with Ccs1.

The protein localises to the plastid. It is found in the chloroplast thylakoid membrane. Its function is as follows. Required during biogenesis of c-type cytochromes (cytochrome c6 and cytochrome f) at the step of heme attachment. The sequence is that of Cytochrome c biogenesis protein CcsA from Aethionema cordifolium (Lebanon stonecress).